We begin with the raw amino-acid sequence, 218 residues long: Ubiquitin-conjugating enzyme E2-24 kDa (218 aa).

A UBC core domain is found at serine 3–threonine 148. Catalysis depends on cysteine 85, which acts as the Glycyl thioester intermediate. The disordered stretch occupies residues glutamine 154 to glutamine 218. Composition is skewed to acidic residues over residues asparagine 160 to aspartate 183 and aspartate 192 to glutamine 218.

The protein belongs to the ubiquitin-conjugating enzyme family.

The protein resides in the cytoplasm. It catalyses the reaction S-ubiquitinyl-[E1 ubiquitin-activating enzyme]-L-cysteine + [E2 ubiquitin-conjugating enzyme]-L-cysteine = [E1 ubiquitin-activating enzyme]-L-cysteine + S-ubiquitinyl-[E2 ubiquitin-conjugating enzyme]-L-cysteine.. The protein operates within protein modification; protein ubiquitination. Catalyzes the covalent attachment of ubiquitin to other proteins. Required for the adaptation to the presence of glucose in the growth medium; mediates the degradation of enzymes involved in gluconeogenesis when cells are shifted to glucose-containing medium. Required for proteasome-dependent catabolite degradation of fructose-1,6-bisphosphatase (FBP1). The polypeptide is Ubiquitin-conjugating enzyme E2-24 kDa (UBC8) (Saccharomyces cerevisiae (strain ATCC 204508 / S288c) (Baker's yeast)).